We begin with the raw amino-acid sequence, 101 residues long: Acylphosphatase (101 aa).

Residues 13–101 (RARILVRGVV…GEFRGFEIRY (89 aa)) enclose the Acylphosphatase-like domain. Catalysis depends on residues R28 and N46.

The protein belongs to the acylphosphatase family.

It carries out the reaction an acyl phosphate + H2O = a carboxylate + phosphate + H(+). This is Acylphosphatase (acyP) from Aeropyrum pernix (strain ATCC 700893 / DSM 11879 / JCM 9820 / NBRC 100138 / K1).